Consider the following 937-residue polypeptide: Protein SEY1 homolog (937 aa).

Topologically, residues methionine 1–asparagine 848 are cytoplasmic. The 247-residue stretch at glycine 34 to cysteine 280 folds into the GB1/RHD3-type G domain. Glycine 44–serine 51 contacts GTP. Coiled-coil stretches lie at residues asparagine 319–glutamate 339 and tyrosine 725–glutamine 750. The chain crosses the membrane as a helical span at residues valine 849–isoleucine 869. At arginine 870 to phenylalanine 872 the chain is on the lumenal side. Residues phenylalanine 873–valine 893 form a helical membrane-spanning segment. The Cytoplasmic segment spans residues tyrosine 894–glutamate 937.

The protein belongs to the TRAFAC class dynamin-like GTPase superfamily. GB1/RHD3 GTPase family. RHD3 subfamily.

The protein localises to the endoplasmic reticulum membrane. In terms of biological role, probable GTP-binding protein involved in generating and maintaining the structure of the tubular endoplasmic reticulum network. The sequence is that of Protein SEY1 homolog from Plasmodium falciparum (isolate 3D7).